The sequence spans 358 residues: Probable cinnamyl alcohol dehydrogenase (358 aa).

Residue Cys48 coordinates Zn(2+). Ser50 contacts NADP(+). His70, Glu71, Cys101, Cys104, Cys107, Cys115, and Cys164 together coordinate Zn(2+). NADP(+) contacts are provided by residues Thr168, 189-194 (GLGGVG), 212-217 (SSSDKK), Thr252, Gly276, and 299-301 (SFV).

The protein belongs to the zinc-containing alcohol dehydrogenase family. Homodimer. Zn(2+) serves as cofactor. Most actively expressed in stem, hypocotyl and root tissue.

The catalysed reaction is (E)-cinnamyl alcohol + NADP(+) = (E)-cinnamaldehyde + NADPH + H(+). The enzyme catalyses (E)-coniferol + NADP(+) = (E)-coniferaldehyde + NADPH + H(+). It catalyses the reaction (E)-sinapyl alcohol + NADP(+) = (E)-sinapaldehyde + NADPH + H(+). It carries out the reaction (E)-4-coumaroyl alcohol + NADP(+) = (E)-4-coumaraldehyde + NADPH + H(+). The catalysed reaction is (E)-caffeyl alcohol + NADP(+) = (E)-caffeyl aldehyde + NADPH + H(+). Its pathway is aromatic compound metabolism; phenylpropanoid biosynthesis. Its function is as follows. This protein catalyzes the final step in a branch of phenylpropanoid synthesis specific for production of lignin monomers. It acts on coniferyl-, sinapyl-, 4-coumaryl- and cinnamyl-alcohol. In Medicago sativa (Alfalfa), this protein is Probable cinnamyl alcohol dehydrogenase (CAD2).